The following is a 660-amino-acid chain: DNA ligase (660 aa).

NAD(+)-binding positions include 32-36, 81-82, and Glu-112; these read DEVYD and SM. Lys-114 functions as the N6-AMP-lysine intermediate in the catalytic mechanism. Residues Arg-135, Glu-169, Lys-284, and Lys-308 each coordinate NAD(+). Positions 402, 405, 418, and 423 each coordinate Zn(2+). In terms of domain architecture, BRCT spans 578–660; sequence VENSPLAHKT…ELLKEAGIEA (83 aa).

The protein belongs to the NAD-dependent DNA ligase family. LigA subfamily. Requires Mg(2+) as cofactor. The cofactor is Mn(2+).

The catalysed reaction is NAD(+) + (deoxyribonucleotide)n-3'-hydroxyl + 5'-phospho-(deoxyribonucleotide)m = (deoxyribonucleotide)n+m + AMP + beta-nicotinamide D-nucleotide.. Its function is as follows. DNA ligase that catalyzes the formation of phosphodiester linkages between 5'-phosphoryl and 3'-hydroxyl groups in double-stranded DNA using NAD as a coenzyme and as the energy source for the reaction. It is essential for DNA replication and repair of damaged DNA. This Nitratiruptor sp. (strain SB155-2) protein is DNA ligase.